Here is a 1135-residue protein sequence, read N- to C-terminus: Glutamate receptor ionotropic, NMDA 3A (1135 aa).

Positions 1 to 23 are cleaved as a signal peptide; it reads MRRLSLWWLLSRVCLLLPPPCAL. The Extracellular portion of the chain corresponds to 24 to 674; sequence VLAGVPSSSS…PIGAFMWPLH (651 aa). The interval 60 to 117 is disordered; that stretch reads TAPRAASRAQEGGRAGAQRDDPESGTWRPPAPSQGARWLGSALHGRGPPGSRKLGEGA. N-linked (GlcNAc...) asparagine glycosylation is found at Asn145, Asn264, Asn275, Asn285, Asn296, Asn300, Asn426, Asn439, Asn549, and Asn565. 2 disulfide bridges follow: Cys537–Cys575 and Cys543–Cys576. Residues Ser631, Ser633, and Arg638 each coordinate glycine. The D-serine site is built by Ser633 and Arg638. The helical transmembrane segment at 675 to 694 threads the bilayer; the sequence is WTMWLGIFVALHITAIFLTL. The Cytoplasmic segment spans residues 695-715; the sequence is YEWKSPFGMTPKGRNRNKVFS. The discontinuously helical intramembrane region spans 716–727; that stretch reads FSSALNVCYALL. The Cytoplasmic segment spans residues 728–741; that stretch reads FGRTAAIKPPKCWT. A helical transmembrane segment spans residues 742–761; the sequence is GRFLMNLWAIFCMFCLSTYT. The Extracellular portion of the chain corresponds to 762-932; it reads ANLAAVMVGE…TLQMGIKHFS (171 aa). Ser801 provides a ligand contact to glycine. Residues Ser801, Ala802, and Asp845 each coordinate D-serine. Position 845 (Asp845) interacts with glycine. A disulfide bond links Cys859 and Cys913. The N-linked (GlcNAc...) asparagine glycan is linked to Asn886. Residues 933–948 traverse the membrane as a helical segment; it reads GLFVLLCIGFGLSILT. The Cytoplasmic portion of the chain corresponds to 949–1135; the sequence is TIGEHIVHRL…YQKTNRTCES (187 aa). The tract at residues 951–987 is PPP2CB binding site; the sequence is GEHIVHRLLLPRIKNKSKLQYWLHTSQRFHRALNTSF. The stretch at 1080 to 1129 forms a coiled coil; the sequence is TTNGKADSLNVTRSSVIQELSELEKQIQVIRQELQLAVSRKTELEEYQKT. The segment at 1082-1115 is GIT1-binding; the sequence is NGKADSLNVTRSSVIQELSELEKQIQVIRQELQL.

The protein belongs to the glutamate-gated ion channel (TC 1.A.10.1) family. NR3A/GRIN3A subfamily. Heterotetramer. Forms heterotetrameric channels composed of two GluN1/zeta subunits (GRIN1), and two identical GluN3 subunits (GRIN3A or GRIN3B) (in vitro). Can also form heterotetrameric channels that contain at least two GluN1 subunits and at least a combination of one GluN2 and one GluN3 subunits (in vitro). Does not form functional homomeric channels. Found in a complex with GRIN1, GRIN2A or GRIN2B and PPP2CB. Probably interacts with PPP2CB. No complex with PPP2CB is detected when NMDARs are stimulated by NMDA. Interacts (via C-terminus) with GIT1, but not with GRIA1/GluA1, nor with synaptophysin/SYP; this interaction competes with GIT1 interaction with ARHGEF7/beta-PIX. N-glycosylated. As to expression, isoform 1 and isoform 2 are expressed in olfactory bulb, frontal occipital, entorhinal and pyriform cortices, hippocampus, striatum, thalamus, cerebellum and spinal cord.

It is found in the cell membrane. The protein resides in the postsynaptic cell membrane. It localises to the postsynaptic density. The catalysed reaction is Ca(2+)(in) = Ca(2+)(out). It carries out the reaction Na(+)(in) = Na(+)(out). With respect to regulation, excitatory glycine receptors are inhibited by D-serine at a concentrion of 10uM. Component of a non-conventional N-methyl-D-aspartate (NMDA) receptors (NMDARs) that function as heterotetrameric, ligand-gated cation channels with low calcium permeability and low voltage-dependent block by Mg(2+). During the development of neural circuits, participates in the synaptic refinement period, restricting spine maturation and growth. Forms glutamatergic receptor complexes with GluN1 and GluN2 subunits which are activated by glycine binding to the GluN1 and GluN3 subunits and L-glutamate binding to GluN2 subunits. Forms excitatory glycinergic receptor complexes with GluN1 alone which are activated by glycine binding to the GluN1 and GluN3 subunits. GluN3A subunit also binds D-serine. Each GluN3 subunit confers differential attributes to channel properties, including activation, deactivation and desensitization kinetics, pH sensitivity, Ca2(+) permeability, and binding to allosteric modulators. By competing with GIT1 interaction with ARHGEF7/beta-PIX, may reduce GIT1/ARHGEF7-regulated local activation of RAC1, hence affecting signaling and limiting the maturation and growth of inactive synapses. The sequence is that of Glutamate receptor ionotropic, NMDA 3A from Rattus norvegicus (Rat).